The following is a 323-amino-acid chain: Aldo-keto reductase family 1 member C18 (323 aa).

NADP(+) is bound by residues 20-24 (GFGTY) and Asp-50. The Proton donor role is filled by Tyr-55. Residue His-117 participates in substrate binding. Residues 166-167 (SN), Gln-190, 216-221 (YGALGT), and 270-280 (KSFNEERIREN) each bind NADP(+).

It belongs to the aldo/keto reductase family. As to quaternary structure, monomer.

The protein localises to the cytoplasm. The catalysed reaction is (17R,20S)-17,20-dihydroxypregn-4-en-3-one + NADP(+) = 17alpha-hydroxyprogesterone + NADPH + H(+). The enzyme catalyses (17R,20S)-17,20-dihydroxypregn-4-en-3-one + NAD(+) = 17alpha-hydroxyprogesterone + NADH + H(+). Its function is as follows. Catalyzes the conversion of progesterone into 20-alpha-dihydroprogesterone (20 alpha-OHP). In Mus musculus (Mouse), this protein is Aldo-keto reductase family 1 member C18 (Akr1c18).